Consider the following 423-residue polypeptide: Proline racemase A (423 aa).

Residues 1-31 form the signal peptide; sequence MRKSVCPKQKFFFSAFPFFFFFCVFPLISRT. The active-site Proton acceptor is the C160. A substrate-binding site is contributed by 161 to 162; sequence GH. N-linked (GlcNAc...) asparagine glycans are attached at residues N213, N266, and N282. Residue D326 participates in substrate binding. C330 acts as the Proton donor in catalysis. Residue 331–332 participates in substrate binding; sequence GT.

It belongs to the proline racemase family. In terms of assembly, homodimer.

The protein resides in the secreted. The protein localises to the membrane. It is found in the cytoplasm. The enzyme catalyses L-proline = D-proline. Its activity is regulated as follows. Inhibited by maleic acid, iodoacetamide, iodoacetate and, most particularly, pyrrole-2-carboxylic acid. Catalyzes the interconversion of L- and D-proline. Secreted isoform 1 contributes to parasite immune evasion by acting as a B-cell mitogen. Probably involved in parasite differentiation and infectivity. This chain is Proline racemase A (PA45-A), found in Trypanosoma cruzi (strain CL Brener).